The sequence spans 1490 residues: DNA-directed RNA polymerase subunit beta' (1490 aa).

4 residues coordinate Zn(2+): Cys-67, Cys-69, Cys-82, and Cys-85. Residues Asp-499, Asp-501, and Asp-503 each contribute to the Mg(2+) site. 4 residues coordinate Zn(2+): Cys-868, Cys-944, Cys-951, and Cys-954.

The protein belongs to the RNA polymerase beta' chain family. As to quaternary structure, the RNAP catalytic core consists of 2 alpha, 1 beta, 1 beta' and 1 omega subunit. When a sigma factor is associated with the core the holoenzyme is formed, which can initiate transcription. The cofactor is Mg(2+). Zn(2+) serves as cofactor.

The enzyme catalyses RNA(n) + a ribonucleoside 5'-triphosphate = RNA(n+1) + diphosphate. DNA-dependent RNA polymerase catalyzes the transcription of DNA into RNA using the four ribonucleoside triphosphates as substrates. In Chlorobaculum tepidum (strain ATCC 49652 / DSM 12025 / NBRC 103806 / TLS) (Chlorobium tepidum), this protein is DNA-directed RNA polymerase subunit beta'.